We begin with the raw amino-acid sequence, 114 residues long: FK506-binding protein 1 (114 aa).

The PPIase FKBP-type domain maps to 26–114; the sequence is GDLVTIHYTG…IFDVELLKVN (89 aa).

This sequence belongs to the FKBP-type PPIase family. FKBP1 subfamily.

The protein localises to the cytoplasm. The enzyme catalyses [protein]-peptidylproline (omega=180) = [protein]-peptidylproline (omega=0). Inhibited by both FK506 and rapamycin. Functionally, PPIases accelerate the folding of proteins. It catalyzes the cis-trans isomerization of proline imidic peptide bonds in oligopeptides. The polypeptide is FK506-binding protein 1 (FPR1) (Candida glabrata (strain ATCC 2001 / BCRC 20586 / JCM 3761 / NBRC 0622 / NRRL Y-65 / CBS 138) (Yeast)).